The primary structure comprises 739 residues: Tegument protein UL47 (739 aa).

The span at 1 to 13 shows a compositional bias: basic and acidic residues; the sequence is MDAARDGRPERRR. Disordered stretches follow at residues 1–123 and 154–198; these read MDAA…QDYL and QFPP…DDAA. A Nuclear localization signal motif is present at residues 10-30; sequence ERRRAVSGTYRTHPFQRPSAR. A compositionally biased stretch (basic residues) spans 28 to 53; that stretch reads SARRSAGRPARCGRRGRGAPRVRRPR. Positions 62 to 87 are enriched in acidic residues; that stretch reads EDTSEDENVYDYIDGDSSDSADDYDS. Residues 94-121 carry the Nuclear export signal motif; that stretch reads RGPNHGAGDAMDTDAPPERAPEGGAPQD. The short motif at 483–493 is the Nuclear export signal element; the sequence is LSAYLTLFVAL.

The protein belongs to the alphaherpesvirinae HHV-1 UL47 family. Interacts with US3 kinase. Interacts with UL31 and UL34; these interactions seem important for efficient virion nuclear egress. Interacts with UL41/VHS. Interacts with host DDB1. In terms of processing, monoubiquitinated. Post-translationally, phosphorylated by US3. This phosphorylation is required for proper nuclear localization.

The protein resides in the virion tegument. The protein localises to the host nucleus. It is found in the host cytoplasm. In terms of biological role, tegument protein that can bind to various RNA transcripts. Plays a role in the attenuation of selective viral and cellular mRNA degradation by modulating the activity of host shutoff RNase UL41/VHS. Also plays a role in the primary envelopment of virions in the perinuclear space, probably by interacting with two nuclear egress proteins UL31 and UL34. The sequence is that of Tegument protein UL47 from Bovine herpesvirus 1.1 (strain Cooper) (BoHV-1).